The primary structure comprises 709 residues: Polyribonucleotide nucleotidyltransferase (709 aa).

Mg(2+) is bound by residues Asp487 and Asp493. Residues 554-613 (PRIHTMKISVEKIKDVIGKGGAVIRQLTEETGTTIEIEDDGTIKIAATDGDQAKEAIRRI) enclose the KH domain. An S1 motif domain is found at 623–691 (GVIYTGKVAR…RQGRVRLSMK (69 aa)).

It belongs to the polyribonucleotide nucleotidyltransferase family. Component of the RNA degradosome, which is a multiprotein complex involved in RNA processing and mRNA degradation. Mg(2+) serves as cofactor.

It is found in the cytoplasm. The enzyme catalyses RNA(n+1) + phosphate = RNA(n) + a ribonucleoside 5'-diphosphate. Its function is as follows. Involved in mRNA degradation. Catalyzes the phosphorolysis of single-stranded polyribonucleotides processively in the 3'- to 5'-direction. The chain is Polyribonucleotide nucleotidyltransferase from Vibrio cholerae serotype O1 (strain ATCC 39315 / El Tor Inaba N16961).